Consider the following 116-residue polypeptide: Distal membrane-arm assembly complex protein 1 (116 aa).

The segment at 1-39 is disordered; sequence MGSRLSQPFESYITAPPGTAAAPAKPAPPATPGAPTSPA. Positions 14-24 are enriched in low complexity; sequence TAPPGTAAAPA. 2 helical membrane-spanning segments follow: residues 52–69 and 82–104; these read VLSG…YWVA and WTIT…GIVV.

As to quaternary structure, interacts with incompletely assembled mitochondrial NADH:ubiquinone oxidoreductase complex (complex I).

It is found in the mitochondrion inner membrane. In terms of biological role, required for the assembly of the mitochondrial NADH:ubiquinone oxidoreductase complex (complex I). Involved in the assembly of the distal region of complex I. In Homo sapiens (Human), this protein is Distal membrane-arm assembly complex protein 1.